The sequence spans 748 residues: Polyribonucleotide nucleotidyltransferase (748 aa).

Positions 484 and 490 each coordinate Mg(2+). Residues 551–610 (PRIETMSVPKDKIRDVIGTGGKVIREIVATTGAKVDIEDDGTVRLSSSDPANIEAAREWI) form the KH domain. The 69-residue stretch at 620 to 688 (GKIYNGKVVN…NRGKVRLSMR (69 aa)) folds into the S1 motif domain. The tract at residues 693-748 (ETGAELDDNRPPRENAERRGGERPRRDRGPRRESGDRPARRDMEPEFAPAFLRKDS) is disordered. Residues 699–736 (DDNRPPRENAERRGGERPRRDRGPRRESGDRPARRDME) show a composition bias toward basic and acidic residues.

It belongs to the polyribonucleotide nucleotidyltransferase family. The cofactor is Mg(2+).

Its subcellular location is the cytoplasm. The catalysed reaction is RNA(n+1) + phosphate = RNA(n) + a ribonucleoside 5'-diphosphate. Involved in mRNA degradation. Catalyzes the phosphorolysis of single-stranded polyribonucleotides processively in the 3'- to 5'-direction. The sequence is that of Polyribonucleotide nucleotidyltransferase from Zymomonas mobilis subsp. mobilis (strain ATCC 31821 / ZM4 / CP4).